Consider the following 460-residue polypeptide: Light-independent protochlorophyllide reductase subunit N (460 aa).

3 residues coordinate [4Fe-4S] cluster: Cys-22, Cys-47, and Cys-107.

This sequence belongs to the BchN/ChlN family. Protochlorophyllide reductase is composed of three subunits; ChlL, ChlN and ChlB. Forms a heterotetramer of two ChlB and two ChlN subunits. Requires [4Fe-4S] cluster as cofactor.

The enzyme catalyses chlorophyllide a + oxidized 2[4Fe-4S]-[ferredoxin] + 2 ADP + 2 phosphate = protochlorophyllide a + reduced 2[4Fe-4S]-[ferredoxin] + 2 ATP + 2 H2O. It functions in the pathway porphyrin-containing compound metabolism; chlorophyll biosynthesis (light-independent). Component of the dark-operative protochlorophyllide reductase (DPOR) that uses Mg-ATP and reduced ferredoxin to reduce ring D of protochlorophyllide (Pchlide) to form chlorophyllide a (Chlide). This reaction is light-independent. The NB-protein (ChlN-ChlB) is the catalytic component of the complex. The chain is Light-independent protochlorophyllide reductase subunit N from Thermosynechococcus vestitus (strain NIES-2133 / IAM M-273 / BP-1).